Consider the following 87-residue polypeptide: Small ribosomal subunit protein bS18 (87 aa).

A compositionally biased stretch (basic and acidic residues) spans Met-1–Lys-20. The interval Met-1–Pro-24 is disordered.

This sequence belongs to the bacterial ribosomal protein bS18 family. In terms of assembly, part of the 30S ribosomal subunit. Forms a tight heterodimer with protein bS6.

Functionally, binds as a heterodimer with protein bS6 to the central domain of the 16S rRNA, where it helps stabilize the platform of the 30S subunit. The sequence is that of Small ribosomal subunit protein bS18 from Leifsonia xyli subsp. xyli (strain CTCB07).